The chain runs to 409 residues: Peptidase T (409 aa).

Position 79 (histidine 79) interacts with Zn(2+). Aspartate 81 is an active-site residue. Aspartate 140 is a binding site for Zn(2+). Glutamate 174 acts as the Proton acceptor in catalysis. Residues glutamate 175, aspartate 197, and histidine 379 each coordinate Zn(2+).

The protein belongs to the peptidase M20B family. It depends on Zn(2+) as a cofactor.

The protein resides in the cytoplasm. It catalyses the reaction Release of the N-terminal residue from a tripeptide.. In terms of biological role, cleaves the N-terminal amino acid of tripeptides. The chain is Peptidase T from Lysinibacillus sphaericus (strain C3-41).